The primary structure comprises 440 residues: MHLDILKNADPEVYAAIQSELERQTDTLELIASENFTSRAVMEACGSVMTNKYAEGYPGKRFYGGCEFVDVAEDLARDRAKKLFSCEYANVQPHSGSSANMAVIFTFCKPGDTILGFDLSHGGHLTHGSPVNFSGQFYNAHFYGVEKETGRIDMNRVEEKAKEVKPKLIICGASAYSRDWEYAEFRRIADSVDAILMADIAHPAGLIATGLLNDPMPHCHVVTTTTHKTLRGPRGGMILMGKDFENPMGIKAKTKTGERIKMVSELLDAMVMPGIQGGPLMHVIAGKAVAFGEALNPEYKQYMEQVRKNAAAMAEQFISLGYDIISGGTDNHLMLIDLRNKDITGKKTENLLHEAGITVNKNMVPFDDKSPFVTSGFRVGAAAMTTREMKEAEAKTIVKFIDKVISNAGSENISAICQEVKEEVNALCQQFPLYDFVPAS.

(6S)-5,6,7,8-tetrahydrofolate is bound by residues Leu-119 and 123-125 (GHL). Lys-228 is modified (N6-(pyridoxal phosphate)lysine). Position 370–372 (370–372 (SPF)) interacts with (6S)-5,6,7,8-tetrahydrofolate.

Belongs to the SHMT family. Homodimer. Requires pyridoxal 5'-phosphate as cofactor.

It localises to the cytoplasm. It catalyses the reaction (6R)-5,10-methylene-5,6,7,8-tetrahydrofolate + glycine + H2O = (6S)-5,6,7,8-tetrahydrofolate + L-serine. The protein operates within one-carbon metabolism; tetrahydrofolate interconversion. Its pathway is amino-acid biosynthesis; glycine biosynthesis; glycine from L-serine: step 1/1. Functionally, catalyzes the reversible interconversion of serine and glycine with tetrahydrofolate (THF) serving as the one-carbon carrier. This reaction serves as the major source of one-carbon groups required for the biosynthesis of purines, thymidylate, methionine, and other important biomolecules. Also exhibits THF-independent aldolase activity toward beta-hydroxyamino acids, producing glycine and aldehydes, via a retro-aldol mechanism. This chain is Serine hydroxymethyltransferase, found in Chloroherpeton thalassium (strain ATCC 35110 / GB-78).